The chain runs to 202 residues: Putative NAD(P)H nitroreductase YodC (202 aa).

FMN-binding positions include 11–13, 68–70, 155–156, and Arg-192; these read RAS, QKQ, and GG.

It belongs to the nitroreductase family. It depends on FMN as a cofactor.

The protein resides in the cytoplasm. Functionally, putative nitroreductase that may contribute to the degradation of aromatic compounds. The sequence is that of Putative NAD(P)H nitroreductase YodC (yodC) from Bacillus subtilis (strain 168).